Reading from the N-terminus, the 191-residue chain is Leucyl/phenylalanyl-tRNA--protein transferase (191 aa).

It belongs to the L/F-transferase family.

The protein localises to the cytoplasm. It carries out the reaction N-terminal L-lysyl-[protein] + L-leucyl-tRNA(Leu) = N-terminal L-leucyl-L-lysyl-[protein] + tRNA(Leu) + H(+). It catalyses the reaction N-terminal L-arginyl-[protein] + L-leucyl-tRNA(Leu) = N-terminal L-leucyl-L-arginyl-[protein] + tRNA(Leu) + H(+). The catalysed reaction is L-phenylalanyl-tRNA(Phe) + an N-terminal L-alpha-aminoacyl-[protein] = an N-terminal L-phenylalanyl-L-alpha-aminoacyl-[protein] + tRNA(Phe). Functions in the N-end rule pathway of protein degradation where it conjugates Leu, Phe and, less efficiently, Met from aminoacyl-tRNAs to the N-termini of proteins containing an N-terminal arginine or lysine. In Nostoc sp. (strain PCC 7120 / SAG 25.82 / UTEX 2576), this protein is Leucyl/phenylalanyl-tRNA--protein transferase.